A 520-amino-acid chain; its full sequence is Dynein axonemal assembly factor 8 (520 aa).

Disordered stretches follow at residues 93 to 202, 217 to 256, 328 to 366, and 388 to 520; these read PVLV…LRQE, RDAC…EGPP, CARK…QLAQ, and DHLS…LEQL. Residues 111–125 show a composition bias toward basic and acidic residues; it reads RTKDASSQEGRDPGR. Position 161 is a phosphoserine (serine 161). Serine 351 bears the Phosphoserine mark. A compositionally biased stretch (acidic residues) spans 401–410; it reads DSEEEEEEEM. Polar residues predominate over residues 420–437; sequence SPSSLGLRTCTGKSQLLQ.

In terms of tissue distribution, expressed in respiratory ciliated cells (at protein level).

It is found in the dynein axonemal particle. Its subcellular location is the cytoplasm. In terms of biological role, in cyliated cells, dynein axonemal particle-specific protein required for deployment of ODA to the axoneme. Interacts with outer dynein arm (ODA) subunits. The protein is Dynein axonemal assembly factor 8 of Homo sapiens (Human).